The primary structure comprises 451 residues: ATP synthase subunit beta (451 aa).

Residue 143–150 (GGAGVGKT) participates in ATP binding.

This sequence belongs to the ATPase alpha/beta chains family. In terms of assembly, F-type ATPases have 2 components, CF(1) - the catalytic core - and CF(0) - the membrane proton channel. CF(1) has five subunits: alpha(3), beta(3), gamma(1), delta(1), epsilon(1). CF(0) has three main subunits: a(1), b(2) and c(9-12). The alpha and beta chains form an alternating ring which encloses part of the gamma chain. CF(1) is attached to CF(0) by a central stalk formed by the gamma and epsilon chains, while a peripheral stalk is formed by the delta and b chains.

It is found in the cell membrane. It carries out the reaction ATP + H2O + 4 H(+)(in) = ADP + phosphate + 5 H(+)(out). In terms of biological role, produces ATP from ADP in the presence of a proton gradient across the membrane. The catalytic sites are hosted primarily by the beta subunits. The polypeptide is ATP synthase subunit beta (Coprothermobacter proteolyticus (strain ATCC 35245 / DSM 5265 / OCM 4 / BT)).